Here is a 257-residue protein sequence, read N- to C-terminus: Imidazole glycerol phosphate synthase subunit HisF (257 aa).

Residues D12 and D131 contribute to the active site.

It belongs to the HisA/HisF family. As to quaternary structure, heterodimer of HisH and HisF.

The protein resides in the cytoplasm. The enzyme catalyses 5-[(5-phospho-1-deoxy-D-ribulos-1-ylimino)methylamino]-1-(5-phospho-beta-D-ribosyl)imidazole-4-carboxamide + L-glutamine = D-erythro-1-(imidazol-4-yl)glycerol 3-phosphate + 5-amino-1-(5-phospho-beta-D-ribosyl)imidazole-4-carboxamide + L-glutamate + H(+). It participates in amino-acid biosynthesis; L-histidine biosynthesis; L-histidine from 5-phospho-alpha-D-ribose 1-diphosphate: step 5/9. IGPS catalyzes the conversion of PRFAR and glutamine to IGP, AICAR and glutamate. The HisF subunit catalyzes the cyclization activity that produces IGP and AICAR from PRFAR using the ammonia provided by the HisH subunit. The polypeptide is Imidazole glycerol phosphate synthase subunit HisF (Rhodococcus erythropolis (strain PR4 / NBRC 100887)).